A 351-amino-acid chain; its full sequence is Prostaglandin reductase 2 (351 aa).

99–100 is a binding site for substrate; the sequence is FY. Residues 165–168, lysine 192, tyrosine 208, asparagine 231, 253–259, 287–289, and asparagine 337 contribute to the NADP(+) site; these read GACG, CGQISQY, and FTV. 288 to 290 provides a ligand contact to substrate; that stretch reads TVL.

The protein belongs to the NADP-dependent oxidoreductase L4BD family. As to quaternary structure, monomer. In terms of tissue distribution, widely expressed with highest levels in adipose tissues.

The protein resides in the cytoplasm. The catalysed reaction is 13,14-dihydro-15-oxo-prostaglandin E2 + NAD(+) = 15-oxoprostaglandin E2 + NADH + H(+). It catalyses the reaction 13,14-dihydro-15-oxo-prostaglandin E2 + NADP(+) = 15-oxoprostaglandin E2 + NADPH + H(+). It carries out the reaction 13,14-dihydro-15-oxo-PGF2alpha + NADP(+) = 15-oxoprostaglandin F2alpha + NADPH + H(+). The enzyme catalyses 13,14-dihydro-15-oxo-prostaglandin E1 + NADP(+) = 15-oxoprostaglandin E1 + NADPH + H(+). The catalysed reaction is 13,14-dihydro-15-oxo-prostaglandin F1alpha + NADP(+) = 15-oxoprostaglandin F1alpha + NADPH + H(+). In terms of biological role, functions as 15-oxo-prostaglandin 13-reductase and acts on 15-keto-PGE1, 15-keto-PGE2, 15-keto-PGE1-alpha and 15-keto-PGE2-alpha with highest activity towards 15-keto-PGE2. Overexpression represses transcriptional activity of PPARG and inhibits adipocyte differentiation. This Mus musculus (Mouse) protein is Prostaglandin reductase 2.